The chain runs to 83 residues: Consomatin Rs1 (83 aa).

Positions 1–22 (MQTAYWVMVMMMVWITAPLSEG) are cleaved as a signal peptide. A propeptide spanning residues 23 to 55 (GKLNNVIRGLVPDDVTPKRISQSLISRRRFDSR) is cleaved from the precursor. A disulfide bridge connects residues Cys-62 and Cys-67. At Trp-64 the chain carries D-tryptophan. Pro-68 is modified (4-hydroxyproline). The propeptide occupies 71–83 (LHGDNYDLKEKDK).

It belongs to the conotoxin C superfamily. Consomatin family. As to expression, expressed by the venom duct.

It is found in the secreted. In terms of biological role, moderately activates human somatostatin receptors (SSTR) with a preferential activation of SSTR1 and SSTR4. In vivo, does not cause behavioral changes in mice within a few minutes of intracranial injection, but causes a progressive loss of movement thereafter. Four to five hours after injection, mice recover, even with the highest dose tested. Shows antinociception and antihyperalgesia activities in two mouse models of acute pain, most probably by acting outside the central nervous system. This Conus raulsilvai (Sea snail) protein is Consomatin Rs1.